The following is a 402-amino-acid chain: NADH-quinone oxidoreductase subunit D (402 aa).

It belongs to the complex I 49 kDa subunit family. As to quaternary structure, NDH-1 is composed of 14 different subunits. Subunits NuoB, C, D, E, F, and G constitute the peripheral sector of the complex.

The protein localises to the cell inner membrane. The enzyme catalyses a quinone + NADH + 5 H(+)(in) = a quinol + NAD(+) + 4 H(+)(out). Its function is as follows. NDH-1 shuttles electrons from NADH, via FMN and iron-sulfur (Fe-S) centers, to quinones in the respiratory chain. The immediate electron acceptor for the enzyme in this species is believed to be ubiquinone. Couples the redox reaction to proton translocation (for every two electrons transferred, four hydrogen ions are translocated across the cytoplasmic membrane), and thus conserves the redox energy in a proton gradient. This is NADH-quinone oxidoreductase subunit D from Xanthobacter autotrophicus (strain ATCC BAA-1158 / Py2).